Reading from the N-terminus, the 472-residue chain is MTSDFKVIIVGGSVAGLSLAHCLEKIGVSFVVLEKGNQIAPQLGASIGILPNGGRILDQLGIFHSIEDEIEPLESAMMRYPDGFSFKSQYPQALHTSFGYPVAFLERQRFLQILYDKLKSKDCVFTNKRVVSIASGQDKVTAKTSDGAKYLADIVIGADGVHSIVRSEIWRHLKENSQISVLEAPNASIKHDYSCIYGISLNVPQIILGIQLNCLDDGVSIHLFTGKQSKLFWFVIIKTPQASFAKVEIDNTHTARCICEGLRTKKVSDTLCFEDVWSRCTIFKMTPLEEGVFKHWNYGRLACIGDAIRKMAPNNGQGANMAIEDACSLANILQKKISHGSIRDQDINSMFQEFSMAQRARTESVCAQSEFLVRMHANQGIGRRLLGRYLIPFLYDAPAGLSGFSISGATRIEFIDLPTRSLRGAWGKSWRGSWEFILQSLVYLRPKFRIVYALYLVAAAAFILYCLSSLFP.

Residues 7 to 27 (VIIVGGSVAGLSLAHCLEKIG) form a helical membrane-spanning segment. FAD-binding residues include E34, G48, and R107. An N-linked (GlcNAc...) asparagine glycan is attached at N186. The FAD site is built by D306 and A319. A helical transmembrane segment spans residues 450 to 470 (IVYALYLVAAAAFILYCLSSL).

It belongs to the paxM FAD-dependent monooxygenase family. It depends on FAD as a cofactor.

The protein localises to the membrane. It participates in secondary metabolite biosynthesis. Functionally, FAD-dependent monooxygenase; part of the gene cluster that mediates the biosynthesis of lolitrems, indole-diterpene mycotoxins that are potent tremorgens in mammals, and are synthesized by clavicipitaceous fungal endophytes in association with their grass hosts. The geranylgeranyl diphosphate (GGPP) synthase ltmG is proposed to catalyze the first step in lolitrem biosynthesis. LtmG catalyzes a series of iterative condensations of isopentenyl diphosphate (IPP) with dimethylallyl diphosphate (DMAPP), geranyl diphosphate (GPP), and farnesyl diphosphate (FPP), to form GGPP. GGPP then condenses with indole-3-glycerol phosphate to form 3-geranylgeranylindole, an acyclic intermediate, to be incorporated into paxilline. Either ltmG or ltmC could be responsible for this step, as both are putative prenyl transferases. The FAD-dependent monooxygenase ltmM then catalyzes the epoxidation of the two terminal alkenes of the geranylgeranyl moiety, which is subsequently cyclized by ltmC, to paspaline. The cytochrome P450 monooxygenases ltmQ and ltmP can sequentially oxidize paspaline to terpendole E and terpendole F. Alternatively, ltmP converts paspaline to an intermediate which is oxidized by ltmQ to terpendole F. LtmF, ltmK, ltmE and ltmJ appear to be unique to the epichloe endophytes. The prenyltransferase ltmF is involved in the 27-hydroxyl-O-prenylation. The cytochrome P450 monooxygenase ltmK is required for the oxidative acetal ring formation. The multi-functional prenyltransferase ltmE is required for C20- and C21-prenylations of the indole ring of paspalanes and acts together with the cytochrome P450 monooxygenase ltmJ to yield lolitremanes by multiple oxidations and ring closures. The stereoisomer pairs of lolitriol and lolitrem N or lolitrem B and lolitrem F may be attributed to variations in the way in which ring closure can occur under the action of ltmJ. While the major product of this pathway is lolitrem B, the prenyl transferases and cytochrome P450 monooxygenases identified in this pathway have a remarkable versatility in their regio- and stereo-specificities to generate a diverse range of metabolites that are products of a metabolic grid rather than a linear pathway. The sequence is that of FAD-dependent monooxygenase ltmM (ltmM) from Epichloe festucae (strain Fl1).